The following is a 382-amino-acid chain: D-galactonate dehydratase (382 aa).

D183 contributes to the Mg(2+) binding site. H185 functions as the Proton donor in the catalytic mechanism. 2 residues coordinate Mg(2+): E209 and E235. The Proton acceptor role is filled by H285.

This sequence belongs to the mandelate racemase/muconate lactonizing enzyme family. GalD subfamily. Mg(2+) serves as cofactor.

The enzyme catalyses D-galactonate = 2-dehydro-3-deoxy-D-galactonate + H2O. It participates in carbohydrate acid metabolism; D-galactonate degradation; D-glyceraldehyde 3-phosphate and pyruvate from D-galactonate: step 1/3. Catalyzes the dehydration of D-galactonate to 2-keto-3-deoxy-D-galactonate. The protein is D-galactonate dehydratase of Cronobacter sakazakii (strain ATCC BAA-894) (Enterobacter sakazakii).